A 317-amino-acid polypeptide reads, in one-letter code: Porphobilinogen deaminase (317 aa).

At cysteine 240 the chain carries S-(dipyrrolylmethanemethyl)cysteine.

This sequence belongs to the HMBS family. Monomer. The cofactor is dipyrromethane.

The catalysed reaction is 4 porphobilinogen + H2O = hydroxymethylbilane + 4 NH4(+). Its pathway is porphyrin-containing compound metabolism; protoporphyrin-IX biosynthesis; coproporphyrinogen-III from 5-aminolevulinate: step 2/4. Functionally, tetrapolymerization of the monopyrrole PBG into the hydroxymethylbilane pre-uroporphyrinogen in several discrete steps. The polypeptide is Porphobilinogen deaminase (Nitratidesulfovibrio vulgaris (strain DSM 19637 / Miyazaki F) (Desulfovibrio vulgaris)).